We begin with the raw amino-acid sequence, 444 residues long: uncharacterized protein (444 aa).

The span at 1-11 (MASSAGRDKLR) shows a compositional bias: basic and acidic residues. The segment at 1 to 35 (MASSAGRDKLRSRGQRVFAFGSSTPRDLSHMSKVP) is disordered.

This is an uncharacterized protein from Caenorhabditis elegans.